The following is a 509-amino-acid chain: Photosystem II CP47 reaction center protein (509 aa).

A run of 6 helical transmembrane segments spans residues 21–36 (AVHL…WAGS), 101–115 (IGLS…IWHW), 140–156 (GIHL…FGAF), 203–218 (IAAG…FHLS), 237–252 (VLSS…AFIV), and 457–472 (SFAL…HGGR).

Belongs to the PsbB/PsbC family. PsbB subfamily. As to quaternary structure, PSII is composed of 1 copy each of membrane proteins PsbA, PsbB, PsbC, PsbD, PsbE, PsbF, PsbH, PsbI, PsbJ, PsbK, PsbL, PsbM, PsbT, PsbX, PsbY, PsbZ, Psb30/Ycf12, at least 3 peripheral proteins of the oxygen-evolving complex and a large number of cofactors. It forms dimeric complexes. It depends on Binds multiple chlorophylls. PSII binds additional chlorophylls, carotenoids and specific lipids. as a cofactor.

It is found in the plastid. It localises to the cyanelle thylakoid membrane. Functionally, one of the components of the core complex of photosystem II (PSII). It binds chlorophyll and helps catalyze the primary light-induced photochemical processes of PSII. PSII is a light-driven water:plastoquinone oxidoreductase, using light energy to abstract electrons from H(2)O, generating O(2) and a proton gradient subsequently used for ATP formation. The protein is Photosystem II CP47 reaction center protein of Cyanophora paradoxa.